A 320-amino-acid chain; its full sequence is Methyltransferase gedG (320 aa).

Residues 61-154 form a methyltransferase domain region; sequence DAGAGNGVYS…QLRPGGTFAC (94 aa). Positions 231–252 are disordered; the sequence is GLLPPERRGEVTEPDHEGPHDQ. Residues 235–252 show a composition bias toward basic and acidic residues; it reads PERRGEVTEPDHEGPHDQ.

The protein belongs to the methyltransferase superfamily.

Its pathway is secondary metabolite biosynthesis. Its function is as follows. Methyltransferase; part of the gene cluster that mediates the biosynthesis of geodin, an intermediate in the biosynthesis of other natural products. The pathway begins with the synthesis of atrochrysone thioester by the polyketide synthase (PKS) gedC. The atrochrysone carboxyl ACP thioesterase gedB then breaks the thioester bond and releases the atrochrysone carboxylic acid from gedC. The atrochrysone carboxylic acid is then converted to atrochrysone which is further transformed into emodinanthrone. The next step is performed by the emodinanthrone oxygenase gedH that catalyzes the oxidation of emodinanthrone to emodin. Emodin O-methyltransferase encoded probably by gedA then catalyzes methylation of the 8-hydroxy group of emodin to form questin. Ring cleavage of questin by questin oxidase gedK leads to desmethylsulochrin via several intermediates including questin epoxide. Another methylation step probably catalyzed by methyltransferase gedG leads to the formation of sulochrin which is further converted to dihydrogeodin by the sulochrin halogenase gedL. Finally, the dihydrogeodin oxidase gedJ catalyzes the stereospecific phenol oxidative coupling reaction converting dihydrogeodin to geodin. This Aspergillus terreus (strain NIH 2624 / FGSC A1156) protein is Methyltransferase gedG.